Reading from the N-terminus, the 157-residue chain is Crossover junction endodeoxyribonuclease RuvC (157 aa).

Catalysis depends on residues aspartate 7, glutamate 66, and aspartate 139. Aspartate 7, glutamate 66, and aspartate 139 together coordinate Mg(2+).

This sequence belongs to the RuvC family. In terms of assembly, homodimer which binds Holliday junction (HJ) DNA. The HJ becomes 2-fold symmetrical on binding to RuvC with unstacked arms; it has a different conformation from HJ DNA in complex with RuvA. In the full resolvosome a probable DNA-RuvA(4)-RuvB(12)-RuvC(2) complex forms which resolves the HJ. The cofactor is Mg(2+).

The protein resides in the cytoplasm. It carries out the reaction Endonucleolytic cleavage at a junction such as a reciprocal single-stranded crossover between two homologous DNA duplexes (Holliday junction).. The RuvA-RuvB-RuvC complex processes Holliday junction (HJ) DNA during genetic recombination and DNA repair. Endonuclease that resolves HJ intermediates. Cleaves cruciform DNA by making single-stranded nicks across the HJ at symmetrical positions within the homologous arms, yielding a 5'-phosphate and a 3'-hydroxyl group; requires a central core of homology in the junction. The consensus cleavage sequence is 5'-(A/T)TT(C/G)-3'. Cleavage occurs on the 3'-side of the TT dinucleotide at the point of strand exchange. HJ branch migration catalyzed by RuvA-RuvB allows RuvC to scan DNA until it finds its consensus sequence, where it cleaves and resolves the cruciform DNA. The sequence is that of Crossover junction endodeoxyribonuclease RuvC from Helicobacter pylori (strain P12).